The following is a 732-amino-acid chain: Ribosomal RNA large subunit methyltransferase K/L (732 aa).

A THUMP domain is found at M50–L162. Residues T396–A424 form a disordered region.

Belongs to the methyltransferase superfamily. RlmKL family.

The protein localises to the cytoplasm. The enzyme catalyses guanosine(2445) in 23S rRNA + S-adenosyl-L-methionine = N(2)-methylguanosine(2445) in 23S rRNA + S-adenosyl-L-homocysteine + H(+). The catalysed reaction is guanosine(2069) in 23S rRNA + S-adenosyl-L-methionine = N(2)-methylguanosine(2069) in 23S rRNA + S-adenosyl-L-homocysteine + H(+). Functionally, specifically methylates the guanine in position 2445 (m2G2445) and the guanine in position 2069 (m7G2069) of 23S rRNA. The sequence is that of Ribosomal RNA large subunit methyltransferase K/L from Chromohalobacter salexigens (strain ATCC BAA-138 / DSM 3043 / CIP 106854 / NCIMB 13768 / 1H11).